The following is a 100-amino-acid chain: Large ribosomal subunit protein bL27 (100 aa).

The propeptide occupies 1–9 (MIIMNLQIF). The tract at residues 13–32 (KGMGSSKNGRDSESKRLGTK) is disordered.

This sequence belongs to the bacterial ribosomal protein bL27 family. Post-translationally, the N-terminus is cleaved by ribosomal processing cysteine protease Prp.

This Clostridium kluyveri (strain ATCC 8527 / DSM 555 / NBRC 12016 / NCIMB 10680 / K1) protein is Large ribosomal subunit protein bL27.